A 284-amino-acid polypeptide reads, in one-letter code: ATP synthase subunit beta, chloroplastic (284 aa).

It belongs to the ATPase alpha/beta chains family. In terms of assembly, F-type ATPases have 2 components, CF(1) - the catalytic core - and CF(0) - the membrane proton channel. CF(1) has five subunits: alpha(3), beta(3), gamma(1), delta(1), epsilon(1). CF(0) has four main subunits: a(1), b(1), b'(1) and c(9-12).

It is found in the plastid. The protein resides in the chloroplast thylakoid membrane. The enzyme catalyses ATP + H2O + 4 H(+)(in) = ADP + phosphate + 5 H(+)(out). Functionally, produces ATP from ADP in the presence of a proton gradient across the membrane. The catalytic sites are hosted primarily by the beta subunits. This Asplenium nidus (Bird's nest fern) protein is ATP synthase subunit beta, chloroplastic (atpB).